Here is a 387-residue protein sequence, read N- to C-terminus: Succinate--CoA ligase [ADP-forming] subunit beta (387 aa).

The region spanning 9–245 (KDLLESYGLK…KSQENAKELK (237 aa)) is the ATP-grasp domain. Residues K46, 53–55 (GRG), E100, Y103, and E108 each bind ATP. Mg(2+) contacts are provided by N200 and D214. Substrate is bound by residues N265 and 322–324 (GIV).

This sequence belongs to the succinate/malate CoA ligase beta subunit family. Heterotetramer of two alpha and two beta subunits. It depends on Mg(2+) as a cofactor.

It catalyses the reaction succinate + ATP + CoA = succinyl-CoA + ADP + phosphate. It carries out the reaction GTP + succinate + CoA = succinyl-CoA + GDP + phosphate. It participates in carbohydrate metabolism; tricarboxylic acid cycle; succinate from succinyl-CoA (ligase route): step 1/1. Succinyl-CoA synthetase functions in the citric acid cycle (TCA), coupling the hydrolysis of succinyl-CoA to the synthesis of either ATP or GTP and thus represents the only step of substrate-level phosphorylation in the TCA. The beta subunit provides nucleotide specificity of the enzyme and binds the substrate succinate, while the binding sites for coenzyme A and phosphate are found in the alpha subunit. The sequence is that of Succinate--CoA ligase [ADP-forming] subunit beta from Francisella tularensis subsp. holarctica (strain OSU18).